Consider the following 420-residue polypeptide: Histidine--tRNA ligase (420 aa).

This sequence belongs to the class-II aminoacyl-tRNA synthetase family. As to quaternary structure, homodimer.

Its subcellular location is the cytoplasm. The enzyme catalyses tRNA(His) + L-histidine + ATP = L-histidyl-tRNA(His) + AMP + diphosphate + H(+). The sequence is that of Histidine--tRNA ligase (hisS) from Mycoplasmopsis pulmonis (strain UAB CTIP) (Mycoplasma pulmonis).